Here is a 599-residue protein sequence, read N- to C-terminus: Aspartate--tRNA(Asp/Asn) ligase (599 aa).

Glutamate 169 provides a ligand contact to L-aspartate. The segment at 193–196 (QLFK) is aspartate. An L-aspartate-binding site is contributed by arginine 215. Residues 215-217 (RDE) and glutamine 224 contribute to the ATP site. L-aspartate is bound at residue histidine 447. Position 481 (glutamate 481) interacts with ATP. Position 488 (arginine 488) interacts with L-aspartate. 533-536 (GWDR) provides a ligand contact to ATP.

This sequence belongs to the class-II aminoacyl-tRNA synthetase family. Type 1 subfamily. As to quaternary structure, homodimer.

Its subcellular location is the cytoplasm. The catalysed reaction is tRNA(Asx) + L-aspartate + ATP = L-aspartyl-tRNA(Asx) + AMP + diphosphate. Its function is as follows. Aspartyl-tRNA synthetase with relaxed tRNA specificity since it is able to aspartylate not only its cognate tRNA(Asp) but also tRNA(Asn). Reaction proceeds in two steps: L-aspartate is first activated by ATP to form Asp-AMP and then transferred to the acceptor end of tRNA(Asp/Asn). This Pseudarthrobacter chlorophenolicus (strain ATCC 700700 / DSM 12829 / CIP 107037 / JCM 12360 / KCTC 9906 / NCIMB 13794 / A6) (Arthrobacter chlorophenolicus) protein is Aspartate--tRNA(Asp/Asn) ligase.